The primary structure comprises 1215 residues: Reverse gyrase 2 (1215 aa).

An RG N-terminal-type zinc finger spans residues 3 to 44 (GGVNAVYMGLCYNCGGNIDEDRLEKGLPCARCLPSPPRRATP). Zn(2+)-binding residues include Cys13, Cys16, Cys31, and Cys34. ATP contacts are provided by residues Gln89 and 106 to 113 (APTGVGKS). In terms of domain architecture, Helicase ATP-binding spans 93–249 (AKRLVKGDSF…SLVKARLKLY (157 aa)). The short motif at 209–212 (DDVD) is the DEAD box element. The topoisomerase I stretch occupies residues 614–1215 (VRVKTTLLVV…TGDVMGQSEA (602 aa)). Residues 618 to 783 (TTLLVVESPT…NVRRGRFHEV (166 aa)) form the Toprim domain. Glu624 contacts Mg(2+). The RG C-terminal-type zinc finger occupies 702–729 (IKRCLDCGAQHTSSSPFCPRCGSPRQVD). Zn(2+) contacts are provided by Cys705, Cys708, Cys719, and Cys722. Asp752 is a Mg(2+) binding site. One can recognise a Topo IA-type catalytic domain in the interval 799–1200 (EKSLIEAQKV…SVWRMVDEAV (402 aa)). The active-site O-(5'-phospho-DNA)-tyrosine intermediate is Tyr943.

It in the N-terminal section; belongs to the DEAD box helicase family. DDVD subfamily. The protein in the C-terminal section; belongs to the type IA topoisomerase family. In terms of assembly, monomer. It depends on Zn(2+) as a cofactor. Mg(2+) serves as cofactor.

The protein localises to the cytoplasm. The catalysed reaction is ATP + H2O = ADP + phosphate + H(+). In terms of biological role, modifies the topological state of DNA by introducing positive supercoils in an ATP-dependent process, increasing the linking number in steps of +1. Binds to single-stranded DNA, transiently cleaves and then rejoins the ends, introducing a positive supercoil in the process. The scissile phosphodiester is attacked by the catalytic tyrosine of the enzyme, resulting in the formation of a DNA-(5'-phosphotyrosyl)-enzyme intermediate. Probably involved in rewinding DNA strands in regions of the chromosome that have opened up to allow replication, transcription, DNA repair and/or for DNA protection. In Aeropyrum pernix (strain ATCC 700893 / DSM 11879 / JCM 9820 / NBRC 100138 / K1), this protein is Reverse gyrase 2.